Reading from the N-terminus, the 547-residue chain is Hydroxylamine reductase (547 aa).

4 residues coordinate [4Fe-4S] cluster: cysteine 5, cysteine 8, cysteine 17, and cysteine 23. Positions 242, 266, 310, 401, 429, 454, 489, and 491 each coordinate hybrid [4Fe-2O-2S] cluster. Cysteine 401 carries the post-translational modification Cysteine persulfide.

Belongs to the HCP family. It depends on [4Fe-4S] cluster as a cofactor. The cofactor is hybrid [4Fe-2O-2S] cluster.

Its subcellular location is the cytoplasm. The enzyme catalyses A + NH4(+) + H2O = hydroxylamine + AH2 + H(+). Functionally, catalyzes the reduction of hydroxylamine to form NH(3) and H(2)O. The chain is Hydroxylamine reductase from Thermoanaerobacter pseudethanolicus (strain ATCC 33223 / 39E) (Clostridium thermohydrosulfuricum).